We begin with the raw amino-acid sequence, 302 residues long: Methionyl-tRNA formyltransferase (302 aa).

Position 108–111 (108–111 (SLLP)) interacts with (6S)-5,6,7,8-tetrahydrofolate. Positions 276–288 (REGKRPMEPEEFL) are enriched in basic and acidic residues. Residues 276-302 (REGKRPMEPEEFLRGFPLPEGSRAHTA) are disordered.

The protein belongs to the Fmt family.

The catalysed reaction is L-methionyl-tRNA(fMet) + (6R)-10-formyltetrahydrofolate = N-formyl-L-methionyl-tRNA(fMet) + (6S)-5,6,7,8-tetrahydrofolate + H(+). In terms of biological role, attaches a formyl group to the free amino group of methionyl-tRNA(fMet). The formyl group appears to play a dual role in the initiator identity of N-formylmethionyl-tRNA by promoting its recognition by IF2 and preventing the misappropriation of this tRNA by the elongation apparatus. This Cereibacter sphaeroides (strain ATCC 17029 / ATH 2.4.9) (Rhodobacter sphaeroides) protein is Methionyl-tRNA formyltransferase.